We begin with the raw amino-acid sequence, 222 residues long: Superoxide dismutase [Mn], mitochondrial (222 aa).

The transit peptide at 1-24 (MLSRGVCGTSRQLAPALGYLGSRQ) directs the protein to the mitochondrion. H50 serves as a coordination point for Mn(2+). At Y58 the chain carries 3'-nitrotyrosine. K68 and K75 each carry N6-acetyllysine; alternate. An N6-succinyllysine; alternate mark is found at K68 and K75. H98 is a binding site for Mn(2+). At K114 the chain carries N6-acetyllysine. An N6-acetyllysine; alternate mark is found at K122 and K130. K122 and K130 each carry N6-succinyllysine; alternate. Residues D183 and H187 each coordinate Mn(2+). The residue at position 202 (K202) is an N6-acetyllysine.

It belongs to the iron/manganese superoxide dismutase family. In terms of assembly, homotetramer. Mn(2+) is required as a cofactor. In terms of processing, nitrated under oxidative stress. Nitration coupled with oxidation inhibits the catalytic activity. Acetylation at Lys-122 decreases enzymatic activity. Deacetylated by SIRT3 upon exposure to ionizing radiations or after long fasting. Post-translationally, polyubiquitinated; leading to proteasomal degradation. Deubiquitinated by USP36 which increases protein stability.

It is found in the mitochondrion matrix. The enzyme catalyses 2 superoxide + 2 H(+) = H2O2 + O2. Destroys superoxide anion radicals which are normally produced within the cells and which are toxic to biological systems. In Pongo pygmaeus (Bornean orangutan), this protein is Superoxide dismutase [Mn], mitochondrial (SOD2).